We begin with the raw amino-acid sequence, 495 residues long: Cytochrome P450 monooxygenase BOA4 (495 aa).

A helical membrane pass occupies residues 12-31; it reads LANSNTVIAGCIVFALYYLF. N-linked (GlcNAc...) asparagine glycosylation is present at Asn-115. Position 439 (Cys-439) interacts with heme.

It belongs to the cytochrome P450 family. The cofactor is heme.

Its subcellular location is the membrane. Its pathway is polyketide biosynthesis. In terms of biological role, cytochrome P450 monooxygenase; part of the gene cluster A that mediates the biosynthesis of botcinic acid and its botcinin derivatives, acetate-derived polyketides that contribute to virulence when combined with the sesquiterpene botrydial. Botcinic acid and its derivatives have been shown to induce chlorosis and necrosis during host plant infection, but also have antifungal activities. Two polyketide synthases, BOA6 and BOA9, are involved in the biosynthesis of botcinins. BOA6 mediates the formation of the per-methylated tetraketide core by condensation of four units of malonyl-CoA with one unit of acetyl-CoA, which would be methylated in activated methylene groups to yield a bicyclic acid intermediate that could then either be converted to botrylactone derivatives or lose the starter acetate unit through a retro-Claisen type C-C bond cleavage to yield botcinin derivatives. The second polyketide synthase, BOA9, is probably required for the biosynthesis of the tetraketide side chain of botcinins. The methyltransferase (MT) domain within BOA6 is probably responsible for the incorporation of four methyl groups. The trans-enoyl reductase BOA5 might take over the enoyl reductase function of BOA6 that misses an ER domain. The monooxygenases BOA2, BOA3 and BOA4 might be involved in further hydroxylations at C4, C5 and C8, whereas BOA7, close to BOA9, could potentially be involved in the hydroxylation at C4 in the side chain of botcinins. The sequence is that of Cytochrome P450 monooxygenase BOA4 from Botryotinia fuckeliana (strain B05.10) (Noble rot fungus).